Consider the following 1761-residue polypeptide: Laminin subunit beta-4 (1761 aa).

Residues 1–19 form the signal peptide; the sequence is MQFQLTLFLHLGWLSYSKA. Positions 24-264 constitute a Laminin N-terminal domain; it reads NRGACHPTTG…ALYEMIVRGS (241 aa). Residues N169, N229, and N246 are each glycosylated (N-linked (GlcNAc...) asparagine). 19 disulfides stabilise this stretch: C265-C274, C267-C295, C297-C306, C309-C329, C332-C341, C334-C359, C362-C371, C374-C392, C395-C408, C397-C423, C425-C434, C437-C452, C455-C468, C457-C475, C477-C486, C489-C503, C506-C518, C508-C525, and C527-C536. 4 consecutive Laminin EGF-like domains span residues 265–331, 332–394, 395–454, and 455–505; these read CFCN…ACRS, CSCN…ACIP, CECD…GCQP, and CDCN…GCSP. In terms of domain architecture, Laminin EGF-like 5; truncated spans 506 to 552; the sequence is CDCDIGGAYSNVCSPKNGQCECRPHVTGRSCSEPAPGYFFAPLNFYL. A Laminin IV type B domain is found at 545–763; that stretch reads FAPLNFYLYE…LIISMSAKLH (219 aa). Disulfide bonds link C769–C781, C771–C788, C790–C799, C802–C814, C817–C829, C819–C836, C838–C847, C850–C860, C863–C872, C865–C879, C882–C891, C894–C908, C913–C938, C940–C949, C952–C967, C970–C984, C972–C991, C994–C1003, C1006–C1019, C1022–C1043, C1024–C1050, C1052–C1061, C1064–C1077, C1080–C1092, C1082–C1099, C1101–C1110, C1113–C1125, C1128–C1140, C1130–C1147, C1149–C1158, and C1161–C1172. Laminin EGF-like domains lie at 769 to 816, 817 to 862, 863 to 910, 911 to 969, 970 to 1021, 1022 to 1079, 1080 to 1127, and 1128 to 1174; these read CKCH…GCHP, CHCH…SCHP, CPCN…PCRP, CLCP…PCQP, CACN…TCRR, CSCH…GCQS, CDCD…RCIP, and CDCN…TCLQ. N1016 carries N-linked (GlcNAc...) asparagine glycosylation. N1055 carries an N-linked (GlcNAc...) asparagine glycan. The segment at 1175–1375 is domain II; it reads CHLCFDQWDH…PDIQILNEKV (201 aa). N1223, N1301, N1326, N1333, and N1354 each carry an N-linked (GlcNAc...) asparagine glycan. The stretch at 1243–1301 forms a coiled coil; that stretch reads KVKDYHDSVRRQIMQLNEQLKAVYEFQDLKDTIERAKNEADLLLEDLQEEIDLQSSVLN. The domain alpha stretch occupies residues 1376–1408; it reads CGDPGNVPCVPLPCGGALCTGRKGHRKCRGPGC. Residues 1409-1761 are domain I; it reads HGSLTLSTNA…QEKKYARCYS (353 aa). Positions 1416 to 1480 form a coiled coil; sequence TNALQKAQEA…SDSEEENINL (65 aa). N-linked (GlcNAc...) asparagine glycans are attached at residues N1469, N1517, N1587, N1596, N1609, and N1725. Residues 1525–1759 are a coiled coil; sequence IQKHMQLCED…VEQEKKYARC (235 aa).

In terms of assembly, laminin is a complex glycoprotein, consisting of three different polypeptide chains (alpha, beta, gamma), which are bound to each other by disulfide bonds into a cross-shaped molecule comprising one long and three short arms with globules at each end.

The protein localises to the secreted. Its subcellular location is the extracellular space. It is found in the extracellular matrix. The protein resides in the basement membrane. In terms of biological role, binding to cells via a high affinity receptor, laminin is thought to mediate the attachment, migration and organization of cells into tissues during embryonic development by interacting with other extracellular matrix components. The polypeptide is Laminin subunit beta-4 (LAMB4) (Homo sapiens (Human)).